The following is a 318-amino-acid chain: Probable cell division protein WhiA (318 aa).

The H-T-H motif DNA-binding region spans 281-314 (SLKELGQMLVPPVGKSGVNHRLRKIEEISKKLKE).

Belongs to the WhiA family.

In terms of biological role, involved in cell division and chromosome segregation. This chain is Probable cell division protein WhiA, found in Thermoanaerobacter sp. (strain X514).